Consider the following 114-residue polypeptide: Large ribosomal subunit protein uL22 (114 aa).

Belongs to the universal ribosomal protein uL22 family. As to quaternary structure, part of the 50S ribosomal subunit.

Functionally, this protein binds specifically to 23S rRNA; its binding is stimulated by other ribosomal proteins, e.g. L4, L17, and L20. It is important during the early stages of 50S assembly. It makes multiple contacts with different domains of the 23S rRNA in the assembled 50S subunit and ribosome. Its function is as follows. The globular domain of the protein is located near the polypeptide exit tunnel on the outside of the subunit, while an extended beta-hairpin is found that lines the wall of the exit tunnel in the center of the 70S ribosome. The chain is Large ribosomal subunit protein uL22 from Lysinibacillus sphaericus (strain C3-41).